The sequence spans 290 residues: Nucleoid occlusion protein (290 aa).

Residues 153-172 (EALAQRLGKGQSTIANKLRL) constitute a DNA-binding region (H-T-H motif).

The protein belongs to the ParB family.

It localises to the cytoplasm. The protein resides in the nucleoid. Its function is as follows. Effects nucleoid occlusion by binding relatively nonspecifically to DNA and preventing the assembly of the division machinery in the vicinity of the nucleoid, especially under conditions that disturb the cell cycle. It helps to coordinate cell division and chromosome segregation by preventing the formation of the Z ring through the nucleoid, which would cause chromosome breakage. In Bacillus cereus (strain ATCC 10987 / NRS 248), this protein is Nucleoid occlusion protein.